A 205-amino-acid polypeptide reads, in one-letter code: uncharacterized protein (205 aa).

A helical transmembrane segment spans residues 5 to 27; it reads IIVLFIIHFIMINENVFIALLHY.

To T.maritima TM1570.

It is found in the membrane. This is an uncharacterized protein from Aquifex aeolicus (strain VF5).